Consider the following 272-residue polypeptide: 3-hydroxyanthranilate 3,4-dioxygenase (272 aa).

A domain A (catalytic) region spans residues 1–154; sequence MMEWIDENSS…SEEHKTGKPS (154 aa). An O2-binding site is contributed by Arg38. 3 residues coordinate Fe cation: His42, Glu48, and His86. Substrate is bound at residue Glu48. The substrate site is built by Arg90 and Glu100. Positions 155-169 are linker; the sequence is KESSCSINVDTETEL. The tract at residues 170 to 272 is domain B; that stretch reads MEPFPLKQWL…SITVDSLANK (103 aa).

This sequence belongs to the 3-HAO family. Fe(2+) serves as cofactor.

The protein resides in the cytoplasm. It carries out the reaction 3-hydroxyanthranilate + O2 = (2Z,4Z)-2-amino-3-carboxymuconate 6-semialdehyde. Its pathway is cofactor biosynthesis; NAD(+) biosynthesis; quinolinate from L-kynurenine: step 3/3. Functionally, catalyzes the oxidative ring opening of 3-hydroxyanthranilate to 2-amino-3-carboxymuconate semialdehyde, which spontaneously cyclizes to quinolinate. In Nematostella vectensis (Starlet sea anemone), this protein is 3-hydroxyanthranilate 3,4-dioxygenase.